The chain runs to 324 residues: Acetyl-coenzyme A carboxylase carboxyl transferase subunit alpha (324 aa).

One can recognise a CoA carboxyltransferase C-terminal domain in the interval 37 to 291; sequence KLEKRLDKLK…REFIIQEWLR (255 aa).

This sequence belongs to the AccA family. As to quaternary structure, acetyl-CoA carboxylase is a heterohexamer composed of biotin carboxyl carrier protein (AccB), biotin carboxylase (AccC) and two subunits each of ACCase subunit alpha (AccA) and ACCase subunit beta (AccD).

The protein localises to the cytoplasm. It carries out the reaction N(6)-carboxybiotinyl-L-lysyl-[protein] + acetyl-CoA = N(6)-biotinyl-L-lysyl-[protein] + malonyl-CoA. The protein operates within lipid metabolism; malonyl-CoA biosynthesis; malonyl-CoA from acetyl-CoA: step 1/1. Functionally, component of the acetyl coenzyme A carboxylase (ACC) complex. First, biotin carboxylase catalyzes the carboxylation of biotin on its carrier protein (BCCP) and then the CO(2) group is transferred by the carboxyltransferase to acetyl-CoA to form malonyl-CoA. The polypeptide is Acetyl-coenzyme A carboxylase carboxyl transferase subunit alpha (Chlamydia pneumoniae (Chlamydophila pneumoniae)).